A 259-amino-acid polypeptide reads, in one-letter code: Ribosome maturation factor RimP (259 aa).

The segment at 198-259 (SLGLAPEPPP…RGEIDTSEGD (62 aa)) is disordered. Residues 243–253 (LAADKARRGEI) show a composition bias toward basic and acidic residues.

This sequence belongs to the RimP family.

The protein resides in the cytoplasm. Its function is as follows. Required for maturation of 30S ribosomal subunits. The chain is Ribosome maturation factor RimP from Rhodopseudomonas palustris (strain TIE-1).